The sequence spans 726 residues: Catalase-peroxidase (726 aa).

The interval 1-33 (MSTSDDIHNTTATGKCPFHQGGHDQSAGAGTTT) is disordered. The tryptophyl-tyrosyl-methioninium (Trp-Tyr) (with M-252) cross-link spans 105 to 226 (WHGAGTYRSI…LGATEMGLIY (122 aa)). The active-site Proton acceptor is His106. The tryptophyl-tyrosyl-methioninium (Tyr-Met) (with W-105) cross-link spans 226–252 (YVNPEGPDHSGEPLSAAAAIRATFGNM). Position 267 (His267) interacts with heme b.

Belongs to the peroxidase family. Peroxidase/catalase subfamily. In terms of assembly, homodimer or homotetramer. Requires heme b as cofactor. Formation of the three residue Trp-Tyr-Met cross-link is important for the catalase, but not the peroxidase activity of the enzyme.

The enzyme catalyses H2O2 + AH2 = A + 2 H2O. It catalyses the reaction 2 H2O2 = O2 + 2 H2O. Functionally, bifunctional enzyme with both catalase and broad-spectrum peroxidase activity. The sequence is that of Catalase-peroxidase from Escherichia coli (strain K12 / DH10B).